Reading from the N-terminus, the 192-residue chain is Acireductone dioxygenase 2 (192 aa).

Fe(2+) contacts are provided by H99, H101, E105, and H144. Ni(2+) is bound by residues H99, H101, E105, and H144.

The protein belongs to the acireductone dioxygenase (ARD) family. The cofactor is Fe(2+). Requires Ni(2+) as cofactor.

It is found in the cytoplasm. The protein resides in the nucleus. It carries out the reaction 1,2-dihydroxy-5-(methylsulfanyl)pent-1-en-3-one + O2 = 4-methylsulfanyl-2-oxobutanoate + formate + 2 H(+). The enzyme catalyses 1,2-dihydroxy-5-(methylsulfanyl)pent-1-en-3-one + O2 = 3-(methylsulfanyl)propanoate + CO + formate + 2 H(+). It functions in the pathway amino-acid biosynthesis; L-methionine biosynthesis via salvage pathway; L-methionine from S-methyl-5-thio-alpha-D-ribose 1-phosphate: step 5/6. Functionally, catalyzes 2 different reactions between oxygen and the acireductone 1,2-dihydroxy-3-keto-5-methylthiopentene (DHK-MTPene) depending upon the metal bound in the active site. Fe-containing acireductone dioxygenase (Fe-ARD) produces formate and 2-keto-4-methylthiobutyrate (KMTB), the alpha-ketoacid precursor of methionine in the methionine recycle pathway. Ni-containing acireductone dioxygenase (Ni-ARD) produces methylthiopropionate, carbon monoxide and formate, and does not lie on the methionine recycle pathway. This is Acireductone dioxygenase 2 (ARD2) from Arabidopsis thaliana (Mouse-ear cress).